The primary structure comprises 590 residues: UvrABC system protein C (590 aa).

The GIY-YIG domain occupies 14–91 (EQPGCYLMKD…IKKHDPKYNV (78 aa)). Positions 196 to 231 (EDVKRELAEKMHEAAETLEFERAKEYRDQIAAIEMT) constitute a UVR domain.

Belongs to the UvrC family. Interacts with UvrB in an incision complex.

Its subcellular location is the cytoplasm. Functionally, the UvrABC repair system catalyzes the recognition and processing of DNA lesions. UvrC both incises the 5' and 3' sides of the lesion. The N-terminal half is responsible for the 3' incision and the C-terminal half is responsible for the 5' incision. This is UvrABC system protein C from Geobacillus kaustophilus (strain HTA426).